Consider the following 376-residue polypeptide: NADPH oxidase organizer 1 (376 aa).

The PX domain occupies methionine 1–leucine 131. SH3 domains lie at leucine 163 to proline 225 and serine 237 to leucine 296. Residues glycine 302 to glutamine 376 are disordered. Over residues alanine 326–proline 335 the composition is skewed to pro residues. The interval proline 328–proline 337 is proline-rich region; mediates mutually exclusive interactions with itself and NOXA1.

As to quaternary structure, interacts with NOX1, NOXA1, CYBA/p22phox and NCF2/p67phox. Interacts with SH3PXD2A and SH3PXD2B. Expressed in testis, small and large intestines, liver, kidney and pancreas. Isoform 3 is mainly expressed in colon. Isoform 1 is preferentially expressed in testis.

The protein resides in the cell membrane. Constitutively potentiates the superoxide-generating activity of NOX1 and NOX3 and is required for the biogenesis of otoconia/otolith, which are crystalline structures of the inner ear involved in the perception of gravity. Isoform 3 is more potent than isoform 1 in activating NOX3. Together with NOXA1, may also substitute to NCF1/p47phox and NCF2/p67phox in supporting the phagocyte NOX2/gp91phox superoxide-generating activity. The sequence is that of NADPH oxidase organizer 1 (NOXO1) from Homo sapiens (Human).